We begin with the raw amino-acid sequence, 300 residues long: Ribosomal RNA small subunit methyltransferase H (300 aa).

S-adenosyl-L-methionine-binding positions include 46–48 (GGH), Asp65, Phe92, Asp107, and Gln114.

It belongs to the methyltransferase superfamily. RsmH family.

It is found in the cytoplasm. It carries out the reaction cytidine(1402) in 16S rRNA + S-adenosyl-L-methionine = N(4)-methylcytidine(1402) in 16S rRNA + S-adenosyl-L-homocysteine + H(+). Specifically methylates the N4 position of cytidine in position 1402 (C1402) of 16S rRNA. The chain is Ribosomal RNA small subunit methyltransferase H from Prochlorococcus marinus (strain MIT 9312).